A 239-amino-acid polypeptide reads, in one-letter code: Sugar fermentation stimulation protein homolog (239 aa).

It belongs to the SfsA family.

This is Sugar fermentation stimulation protein homolog from Cyanothece sp. (strain PCC 7425 / ATCC 29141).